The chain runs to 908 residues: Putative cell signaling protein HAM1 (908 aa).

Disordered stretches follow at residues 1–24 and 177–359; these read MSVAATKSEISHNPGKMSVTSAVS and TKAA…EHRQ. Basic and acidic residues-rich tracts occupy residues 179–192, 231–247, 261–283, 306–321, and 338–359; these read AADKSRPSQEKLDS, HPRDDPRDAQLVDDKGK, AKSDAQSKAQDLKSSARDYKETG, EQKEQVKGAAYDKRDA, and NQEKARGKAAALRDRIPEEHRQ. Residues 255 to 282 adopt a coiled-coil conformation; it reads YNQAQEAKSDAQSKAQDLKSSARDYKET.

In terms of processing, palmitoylated.

May act as a negative regulator of mating during vegetative growth. In Cryptococcus neoformans var. grubii serotype A (strain H99 / ATCC 208821 / CBS 10515 / FGSC 9487) (Filobasidiella neoformans var. grubii), this protein is Putative cell signaling protein HAM1.